Reading from the N-terminus, the 99-residue chain is L-rhamnose mutarotase (99 aa).

Y18 is a substrate binding site. H22 functions as the Proton donor in the catalytic mechanism. Substrate-binding positions include Y41 and 76-77 (WW).

This sequence belongs to the rhamnose mutarotase family. Homodimer.

The protein resides in the cytoplasm. It carries out the reaction alpha-L-rhamnose = beta-L-rhamnose. It participates in carbohydrate metabolism; L-rhamnose metabolism. Its function is as follows. Involved in the anomeric conversion of L-rhamnose. The chain is L-rhamnose mutarotase from Shigella boydii serotype 18 (strain CDC 3083-94 / BS512).